Here is a 63-residue protein sequence, read N- to C-terminus: Large ribosomal subunit protein uL29 (63 aa).

The protein belongs to the universal ribosomal protein uL29 family.

The chain is Large ribosomal subunit protein uL29 from Pectobacterium atrosepticum (strain SCRI 1043 / ATCC BAA-672) (Erwinia carotovora subsp. atroseptica).